A 594-amino-acid chain; its full sequence is U3 small nucleolar RNA-associated protein 18 (594 aa).

Disordered stretches follow at residues 48-128 (EQEM…WIDS) and 176-200 (KWVD…SNNV). Acidic residues-rich tracts occupy residues 49-72 (QEMD…DEAQ), 102-128 (TMDV…WIDS), and 180-196 (DESD…EEEG). The interval 101–190 (DTMDVDDEDD…ESDSELDDEE (90 aa)) is interaction with UTP21. 2 positions are modified to phosphoserine: serine 182 and serine 184. 5 WD repeats span residues 246–285 (PSHS…NHLV), 290–334 (LVGS…LTHS), 463–504 (GTTT…TSST), 513–554 (QLTT…VFSN), and 560–593 (TPLG…KLNH).

Belongs to the WD repeat UTP18 family. As to quaternary structure, interacts with snoRNA U3. Interacts with MPP10, UTP21 and UTP25. Component of the ribosomal small subunit (SSU) processome composed of at least 40 protein subunits and snoRNA U3.

The protein localises to the nucleus. The protein resides in the nucleolus. Its function is as follows. Involved in nucleolar processing of pre-18S ribosomal RNA and ribosome assembly. The chain is U3 small nucleolar RNA-associated protein 18 (UTP18) from Saccharomyces cerevisiae (strain ATCC 204508 / S288c) (Baker's yeast).